A 94-amino-acid chain; its full sequence is Aspartyl/glutamyl-tRNA(Asn/Gln) amidotransferase subunit C (94 aa).

Belongs to the GatC family. As to quaternary structure, heterotrimer of A, B and C subunits.

The enzyme catalyses L-glutamyl-tRNA(Gln) + L-glutamine + ATP + H2O = L-glutaminyl-tRNA(Gln) + L-glutamate + ADP + phosphate + H(+). It carries out the reaction L-aspartyl-tRNA(Asn) + L-glutamine + ATP + H2O = L-asparaginyl-tRNA(Asn) + L-glutamate + ADP + phosphate + 2 H(+). Allows the formation of correctly charged Asn-tRNA(Asn) or Gln-tRNA(Gln) through the transamidation of misacylated Asp-tRNA(Asn) or Glu-tRNA(Gln) in organisms which lack either or both of asparaginyl-tRNA or glutaminyl-tRNA synthetases. The reaction takes place in the presence of glutamine and ATP through an activated phospho-Asp-tRNA(Asn) or phospho-Glu-tRNA(Gln). In Campylobacter jejuni subsp. jejuni serotype O:6 (strain 81116 / NCTC 11828), this protein is Aspartyl/glutamyl-tRNA(Asn/Gln) amidotransferase subunit C.